A 75-amino-acid polypeptide reads, in one-letter code: SPbeta prophage-derived uncharacterized protein YomT (75 aa).

This chain is SPbeta prophage-derived uncharacterized protein YomT (yomT), found in Bacillus subtilis (strain 168).